We begin with the raw amino-acid sequence, 66 residues long: DNA-directed RNA polymerase subunit omega (66 aa).

It belongs to the RNA polymerase subunit omega family. In terms of assembly, the RNAP catalytic core consists of 2 alpha, 1 beta, 1 beta' and 1 omega subunit. When a sigma factor is associated with the core the holoenzyme is formed, which can initiate transcription.

The catalysed reaction is RNA(n) + a ribonucleoside 5'-triphosphate = RNA(n+1) + diphosphate. In terms of biological role, promotes RNA polymerase assembly. Latches the N- and C-terminal regions of the beta' subunit thereby facilitating its interaction with the beta and alpha subunits. The polypeptide is DNA-directed RNA polymerase subunit omega (Clostridium botulinum (strain Alaska E43 / Type E3)).